A 512-amino-acid chain; its full sequence is 2,3-bisphosphoglycerate-independent phosphoglycerate mutase (512 aa).

D18 and S68 together coordinate Mn(2+). The active-site Phosphoserine intermediate is S68. Substrate contacts are provided by residues H129, R159–D160, R191, R197, R265–R268, and K338. Mn(2+) is bound by residues D403, H407, D444, H445, and H462.

Belongs to the BPG-independent phosphoglycerate mutase family. As to quaternary structure, monomer. Requires Mn(2+) as cofactor.

It catalyses the reaction (2R)-2-phosphoglycerate = (2R)-3-phosphoglycerate. Its pathway is carbohydrate degradation; glycolysis; pyruvate from D-glyceraldehyde 3-phosphate: step 3/5. Functionally, catalyzes the interconversion of 2-phosphoglycerate and 3-phosphoglycerate. This chain is 2,3-bisphosphoglycerate-independent phosphoglycerate mutase, found in Mesomycoplasma hyopneumoniae (strain 232) (Mycoplasma hyopneumoniae).